Here is a 122-residue protein sequence, read N- to C-terminus: Prefoldin subunit 1 (122 aa).

The protein belongs to the prefoldin subunit beta family. In terms of assembly, heterohexamer of two PFD-alpha type and four PFD-beta type subunits.

Functionally, binds specifically to cytosolic chaperonin (c-CPN) and transfers target proteins to it. Binds to nascent polypeptide chain and promotes folding in an environment in which there are many competing pathways for nonnative proteins. The chain is Prefoldin subunit 1 (pfdn1) from Danio rerio (Zebrafish).